The chain runs to 768 residues: Lon protease (768 aa).

A Lon N-terminal domain is found at 4–198; sequence APFLPIRDLV…RILDEIVAEM (195 aa). 349–356 lines the ATP pocket; that stretch reads GPPGIGKT. In terms of domain architecture, Lon proteolytic spans 586–768; it reads TGKIGVVNGL…DDVSKLVFVK (183 aa). Residues serine 674 and lysine 717 contribute to the active site.

This sequence belongs to the peptidase S16 family. As to quaternary structure, homohexamer. Organized in a ring with a central cavity.

The protein localises to the cytoplasm. It carries out the reaction Hydrolysis of proteins in presence of ATP.. ATP-dependent serine protease that mediates the selective degradation of mutant and abnormal proteins as well as certain short-lived regulatory proteins. Required for cellular homeostasis and for survival from DNA damage and developmental changes induced by stress. Degrades polypeptides processively to yield small peptide fragments that are 5 to 10 amino acids long. Binds to DNA in a double-stranded, site-specific manner. This is Lon protease from Fusobacterium nucleatum subsp. nucleatum (strain ATCC 25586 / DSM 15643 / BCRC 10681 / CIP 101130 / JCM 8532 / KCTC 2640 / LMG 13131 / VPI 4355).